The primary structure comprises 441 residues: Protein translocase subunit SecY (441 aa).

The next 10 membrane-spanning stretches (helical) occupy residues leucine 24–isoleucine 44, isoleucine 77–threonine 97, alanine 123–leucine 143, phenylalanine 152–leucine 172, isoleucine 181–isoleucine 201, proline 215–valine 235, valine 272–phenylalanine 292, proline 313–methionine 333, leucine 373–tryptophan 393, and phenylalanine 397–glutamine 417.

The protein belongs to the SecY/SEC61-alpha family. In terms of assembly, component of the Sec protein translocase complex. Heterotrimer consisting of SecY, SecE and SecG subunits. The heterotrimers can form oligomers, although 1 heterotrimer is thought to be able to translocate proteins. Interacts with the ribosome. Interacts with SecDF, and other proteins may be involved. Interacts with SecA.

The protein resides in the cell inner membrane. In terms of biological role, the central subunit of the protein translocation channel SecYEG. Consists of two halves formed by TMs 1-5 and 6-10. These two domains form a lateral gate at the front which open onto the bilayer between TMs 2 and 7, and are clamped together by SecE at the back. The channel is closed by both a pore ring composed of hydrophobic SecY resides and a short helix (helix 2A) on the extracellular side of the membrane which forms a plug. The plug probably moves laterally to allow the channel to open. The ring and the pore may move independently. This chain is Protein translocase subunit SecY, found in Haemophilus influenzae (strain ATCC 51907 / DSM 11121 / KW20 / Rd).